The sequence spans 602 residues: UvrABC system protein C (602 aa).

Positions Asp15–Ile92 constitute a GIY-YIG domain. The 36-residue stretch at Gly197–Thr232 folds into the UVR domain.

It belongs to the UvrC family. In terms of assembly, interacts with UvrB in an incision complex.

The protein localises to the cytoplasm. Its function is as follows. The UvrABC repair system catalyzes the recognition and processing of DNA lesions. UvrC both incises the 5' and 3' sides of the lesion. The N-terminal half is responsible for the 3' incision and the C-terminal half is responsible for the 5' incision. The protein is UvrABC system protein C of Lacticaseibacillus paracasei (strain ATCC 334 / BCRC 17002 / CCUG 31169 / CIP 107868 / KCTC 3260 / NRRL B-441) (Lactobacillus paracasei).